The sequence spans 554 residues: Glucose-6-phosphate isomerase (554 aa).

Glutamate 358 (proton donor) is an active-site residue. Residues histidine 389 and lysine 515 contribute to the active site.

The protein belongs to the GPI family.

It localises to the cytoplasm. The enzyme catalyses alpha-D-glucose 6-phosphate = beta-D-fructose 6-phosphate. It participates in carbohydrate biosynthesis; gluconeogenesis. It functions in the pathway carbohydrate degradation; glycolysis; D-glyceraldehyde 3-phosphate and glycerone phosphate from D-glucose: step 2/4. In terms of biological role, catalyzes the reversible isomerization of glucose-6-phosphate to fructose-6-phosphate. The sequence is that of Glucose-6-phosphate isomerase from Mycobacterium leprae (strain Br4923).